The sequence spans 272 residues: Cytochrome b-c1 complex subunit Rieske, mitochondrial (272 aa).

Over 77-104 (VHNDVTVPDFSAYRREDVMDATTSSQTS) the chain is Mitochondrial matrix. A helical transmembrane segment spans residues 105–138 (SEDRKGFSYLVTATACVATAYAAKNVVTQFISSL). Residues 139 to 272 (SASADVLALS…FVGDDLVVVG (134 aa)) lie on the Mitochondrial intermembrane side of the membrane. Residues 185–270 (EAEVDVSKLR…YQFVGDDLVV (86 aa)) form the Rieske domain. Cysteine 215, histidine 217, leucine 218, cysteine 234, histidine 237, and serine 239 together coordinate [2Fe-2S] cluster. The cysteines at positions 220 and 236 are disulfide-linked.

Belongs to the Rieske iron-sulfur protein family. Component of the ubiquinol-cytochrome c oxidoreductase (cytochrome b-c1 complex, complex III, CIII), a multisubunit enzyme composed of 11 subunits. The complex is composed of 3 respiratory subunits cytochrome b, cytochrome c1 and Rieske protein UQCRFS1, 2 core protein subunits UQCRC1/QCR1 and UQCRC2/QCR2, and 6 low-molecular weight protein subunits UQCRH/QCR6, UQCRB/QCR7, UQCRQ/QCR8, UQCR10/QCR9, UQCR11/QCR10 and subunit 9, the cleavage product of Rieske protein UQCRFS1. The complex exists as an obligatory dimer and forms supercomplexes (SCs) in the inner mitochondrial membrane with NADH-ubiquinone oxidoreductase (complex I, CI) and cytochrome c oxidase (complex IV, CIV), resulting in different assemblies (supercomplex SCI(1)III(2)IV(1) and megacomplex MCI(2)III(2)IV(2)). Incorporation of the Rieske protein UQCRFS1 is the penultimate step in complex III assembly. Interacts with TTC19, which is involved in the clearance of UQCRFS1 fragments. As to quaternary structure, component of the ubiquinol-cytochrome c oxidoreductase (cytochrome b-c1 complex, complex III, CIII). Subunit 9 corresponds to the mitochondrial targeting sequence (MTS) of Rieske protein UQCRFS1. It is retained after processing and incorporated inside complex III, where it remains bound to the complex and localizes between the 2 core subunits UQCRC1/QCR1 and UQCRC2/QCR2. The cofactor is [2Fe-2S] cluster. Post-translationally, proteolytic processing is necessary for the correct insertion of UQCRFS1 in the complex III dimer. Several fragments are generated during UQCRFS1 insertion, most probably due to the endogenous matrix-processing peptidase (MPP) activity of the 2 core protein subunits UQCRC1/QCR1 and UQCRC2/QCR2, which are homologous to the 2 mitochondrial-processing peptidase (MPP) subunits beta-MPP and alpha-MPP respectively. The action of the protease is also necessary for the clearance of the UQCRFS1 fragments.

The protein resides in the mitochondrion inner membrane. The catalysed reaction is a quinol + 2 Fe(III)-[cytochrome c](out) = a quinone + 2 Fe(II)-[cytochrome c](out) + 2 H(+)(out). Component of the ubiquinol-cytochrome c oxidoreductase, a multisubunit transmembrane complex that is part of the mitochondrial electron transport chain which drives oxidative phosphorylation. The respiratory chain contains 3 multisubunit complexes succinate dehydrogenase (complex II, CII), ubiquinol-cytochrome c oxidoreductase (cytochrome b-c1 complex, complex III, CIII) and cytochrome c oxidase (complex IV, CIV), that cooperate to transfer electrons derived from NADH and succinate to molecular oxygen, creating an electrochemical gradient over the inner membrane that drives transmembrane transport and the ATP synthase. The cytochrome b-c1 complex catalyzes electron transfer from ubiquinol to cytochrome c, linking this redox reaction to translocation of protons across the mitochondrial inner membrane, with protons being carried across the membrane as hydrogens on the quinol. In the process called Q cycle, 2 protons are consumed from the matrix, 4 protons are released into the intermembrane space and 2 electrons are passed to cytochrome c. The Rieske protein is a catalytic core subunit containing a [2Fe-2S] iron-sulfur cluster. It cycles between 2 conformational states during catalysis to transfer electrons from the quinol bound in the Q(0) site in cytochrome b to cytochrome c1. Incorporation of UQCRFS1 is the penultimate step in complex III assembly. Its function is as follows. Component of the ubiquinol-cytochrome c oxidoreductase (cytochrome b-c1 complex, complex III, CIII). UQCRFS1 undergoes proteolytic processing once it is incorporated in the complex III dimer. One of the fragments, called subunit 9, corresponds to its mitochondrial targeting sequence (MTS). The proteolytic processing is necessary for the correct insertion of UQCRFS1 in the complex III dimer, but the persistence of UQCRFS1-derived fragments may prevent newly imported UQCRFS1 to be processed and assembled into complex III and is detrimental for the complex III structure and function. This chain is Cytochrome b-c1 complex subunit Rieske, mitochondrial (UQCRFS1), found in Gallus gallus (Chicken).